The sequence spans 1521 residues: Lysophospholipase NTE1 (1521 aa).

The Cytoplasmic segment spans residues 1-50 (MDVVNSTARAAVTSATAVTAVTGTGDRHPNPLSSAVAAASDVANAHGSSS). Residues 51 to 71 (WLGLFARVVLWLLQFVSMVLY) traverse the membrane as a helical segment. Topologically, residues 72–96 (YAIKLATISVPTLLYTLFSTSLTVT) are lumenal. Residues 97–117 (MNATTLMLIVAAMIGAISWVV) form a helical membrane-spanning segment. Residues 118-1521 (RYRYLNMYSR…RTMAPRRASI (1404 aa)) lie on the Cytoplasmic side of the membrane. Disordered regions lie at residues 280 to 301 (HADE…PNYP), 315 to 372 (SVPN…SAHP), and 738 to 768 (HAMD…KVDD). 2 stretches are compositionally biased toward polar residues: residues 316 to 334 (VPNT…NNLP) and 738 to 753 (HAMD…QRSP). A nucleoside 3',5'-cyclic phosphate-binding positions include 670–789 (PASP…GGLA) and 837–957 (RLTN…IASR). Residues 1217 to 1381 (LVLGGGGARG…VDNLTVSHMK (165 aa)) form the PNPLA domain. Positions 1221–1226 (GGGARG) match the GXGXXG motif. The short motif at 1248-1252 (GTSIG) is the GXSXG element. Catalysis depends on S1250, which acts as the Nucleophile. D1368 acts as the Proton acceptor in catalysis. The DGA/G motif lies at 1368–1370 (DGG).

This sequence belongs to the NTE family.

Its subcellular location is the endoplasmic reticulum membrane. The catalysed reaction is a 1-acyl-sn-glycero-3-phosphocholine + H2O = sn-glycerol 3-phosphocholine + a fatty acid + H(+). With respect to regulation, inhibited by organophosphorus esters. Its function is as follows. Intracellular phospholipase B that catalyzes the double deacylation of phosphatidylcholine (PC) to glycerophosphocholine (GroPCho). Plays an important role in membrane lipid homeostasis. Responsible for the rapid PC turnover in response to inositol, elevated temperatures, or when choline is present in the growth medium. In Chaetomium globosum (strain ATCC 6205 / CBS 148.51 / DSM 1962 / NBRC 6347 / NRRL 1970) (Soil fungus), this protein is Lysophospholipase NTE1 (NTE1).